A 195-amino-acid chain; its full sequence is MPLFFSDNLRAALECLLFVAGGPVSVDSLAACLGVKPGDVDELAAELQELYAREERGLQIRAVAGGYQMCTRPEFASYCEALLRPELPALSRAALETLAIIAYRQPVTRTEMEYIRGVKVDGVLNTLISRGLVQEVGRKEAPGRPILYGTTPKFLEFFGLKDLKELPPLEDVAASQENSREAGGRGSIPGHPGEE.

A disordered region spans residues 169–195 (LEDVAASQENSREAGGRGSIPGHPGEE).

This sequence belongs to the ScpB family. In terms of assembly, homodimer. Homodimerization may be required to stabilize the binding of ScpA to the Smc head domains. Component of a cohesin-like complex composed of ScpA, ScpB and the Smc homodimer, in which ScpA and ScpB bind to the head domain of Smc. The presence of the three proteins is required for the association of the complex with DNA.

The protein resides in the cytoplasm. Its function is as follows. Participates in chromosomal partition during cell division. May act via the formation of a condensin-like complex containing Smc and ScpA that pull DNA away from mid-cell into both cell halves. This Moorella thermoacetica (strain ATCC 39073 / JCM 9320) protein is Segregation and condensation protein B.